The sequence spans 181 residues: Nucleoside diphosphate kinase, mitochondrial (181 aa).

Over residues Met-1–Arg-10 the composition is skewed to basic residues. The disordered stretch occupies residues Met-1–Arg-22. The N-terminal 24 residues, Met-1–Tyr-24, are a transit peptide targeting the mitochondrion. Positions 40, 88, 116, 122, 133, and 143 each coordinate ATP. His-146 serves as the catalytic Pros-phosphohistidine intermediate.

Belongs to the NDK family. The cofactor is Mg(2+). As to expression, highest levels in the liver and kidney with lower levels in the heart, brain and breast muscle.

It is found in the mitochondrion intermembrane space. It localises to the mitochondrion matrix. It carries out the reaction a 2'-deoxyribonucleoside 5'-diphosphate + ATP = a 2'-deoxyribonucleoside 5'-triphosphate + ADP. The enzyme catalyses a ribonucleoside 5'-diphosphate + ATP = a ribonucleoside 5'-triphosphate + ADP. With respect to regulation, feedback inhibition by ADP. Major role in the synthesis of nucleoside triphosphates other than ATP. The ATP gamma phosphate is transferred to the NDP beta phosphate via a ping-pong mechanism, using a phosphorylated active-site intermediate. Through the catalyzed exchange of gamma-phosphate between di- and triphosphonucleosides participates in regulation of intracellular nucleotide homeostasis. Binds to anionic phospholipids, predominantly to cardiolipin; the binding inhibits its phosphotransfer activity. Acts as a mitochondria-specific NDK coupled to respiration. Promotes the redistribution of cardiolipin between the mitochondrial inner membrane and outer membrane which is implicated in pro-apoptotic signaling. This is Nucleoside diphosphate kinase, mitochondrial (NME4) from Columba livia (Rock dove).